The sequence spans 57 residues: Large ribosomal subunit protein bL32 (57 aa).

Belongs to the bacterial ribosomal protein bL32 family.

The protein is Large ribosomal subunit protein bL32 (rpmF) of Halalkalibacterium halodurans (strain ATCC BAA-125 / DSM 18197 / FERM 7344 / JCM 9153 / C-125) (Bacillus halodurans).